Reading from the N-terminus, the 85-residue chain is Large ribosomal subunit protein bL27 (85 aa).

A disordered region spans residues 1-21 (MAHKKAGGSTRNGRDSESKRL).

This sequence belongs to the bacterial ribosomal protein bL27 family.

This chain is Large ribosomal subunit protein bL27, found in Pseudomonas putida (strain W619).